The following is a 115-amino-acid chain: NADH-ubiquinone oxidoreductase chain 3 (115 aa).

Transmembrane regions (helical) follow at residues 3-23, 55-75, and 86-106; these read LYTV…VAFW, FFLV…LLPL, and TMMI…AYEW.

Belongs to the complex I subunit 3 family. Core subunit of respiratory chain NADH dehydrogenase (Complex I) which is composed of 45 different subunits. Interacts with TMEM186. Interacts with TMEM242.

Its subcellular location is the mitochondrion inner membrane. It carries out the reaction a ubiquinone + NADH + 5 H(+)(in) = a ubiquinol + NAD(+) + 4 H(+)(out). Its function is as follows. Core subunit of the mitochondrial membrane respiratory chain NADH dehydrogenase (Complex I) which catalyzes electron transfer from NADH through the respiratory chain, using ubiquinone as an electron acceptor. Essential for the catalytic activity of complex I. The sequence is that of NADH-ubiquinone oxidoreductase chain 3 from Mus musculus (Mouse).